The following is an 86-amino-acid chain: Large ribosomal subunit protein bL27 (86 aa).

Positions 1-26 (MAHKKAAGSTRNGRDSESKRLGVKRY) are disordered.

This sequence belongs to the bacterial ribosomal protein bL27 family.

The sequence is that of Large ribosomal subunit protein bL27 from Marinobacter nauticus (strain ATCC 700491 / DSM 11845 / VT8) (Marinobacter aquaeolei).